The chain runs to 230 residues: Demethylmenaquinone methyltransferase (230 aa).

S-adenosyl-L-methionine contacts are provided by residues T62, D80, 100 to 101 (DG), and S117.

This sequence belongs to the class I-like SAM-binding methyltransferase superfamily. MenG/UbiE family.

It carries out the reaction a 2-demethylmenaquinol + S-adenosyl-L-methionine = a menaquinol + S-adenosyl-L-homocysteine + H(+). The protein operates within quinol/quinone metabolism; menaquinone biosynthesis; menaquinol from 1,4-dihydroxy-2-naphthoate: step 2/2. Functionally, methyltransferase required for the conversion of demethylmenaquinol (DMKH2) to menaquinol (MKH2). This chain is Demethylmenaquinone methyltransferase, found in Corynebacterium glutamicum (strain ATCC 13032 / DSM 20300 / JCM 1318 / BCRC 11384 / CCUG 27702 / LMG 3730 / NBRC 12168 / NCIMB 10025 / NRRL B-2784 / 534).